A 214-amino-acid polypeptide reads, in one-letter code: Outer-membrane lipoprotein LolB (214 aa).

The first 25 residues, 1-25 (MNNLKRFTKSIFSCIALSGLLFLGG), serve as a signal peptide directing secretion. A lipid anchor (N-palmitoyl cysteine) is attached at cysteine 26. Cysteine 26 carries the S-diacylglycerol cysteine lipid modification.

The protein belongs to the LolB family. As to quaternary structure, monomer.

The protein localises to the cell outer membrane. Plays a critical role in the incorporation of lipoproteins in the outer membrane after they are released by the LolA protein. The sequence is that of Outer-membrane lipoprotein LolB from Shewanella sp. (strain MR-7).